Here is a 139-residue protein sequence, read N- to C-terminus: Protein cornichon homolog 4 (139 aa).

3 helical membrane passes run 5-25, 57-77, and 118-138; these read VFLF…YFII, IVTV…NLPV, and LGFY…ALIN.

The protein belongs to the cornichon family. As to quaternary structure, interacts with Sec23/24 complex components SEC24B and SEC24D. Interacts with CCR5. Interacts with ADRB2 in the early secretory pathway.

The protein resides in the membrane. It localises to the endoplasmic reticulum. Its subcellular location is the endoplasmic reticulum-Golgi intermediate compartment. In terms of biological role, involved in G protein-coupled receptors (GPCRs) trafficking from the endoplasmic reticulum to the cell surface; it promotes the exit of GPCRs from the early secretory pathway, likely through interaction with the COPII machinery. The chain is Protein cornichon homolog 4 (Cnih4) from Mus musculus (Mouse).